A 151-amino-acid polypeptide reads, in one-letter code: Protein SprT-like (151 aa).

Residues 7-147 (QKLTESISES…GKCKGKLHLH (141 aa)) enclose the SprT-like domain. His67 is a binding site for Zn(2+). Residue Glu68 is part of the active site. Zn(2+) is bound at residue His71.

It belongs to the SprT family. The cofactor is Zn(2+).

It localises to the cytoplasm. The chain is Protein SprT-like from Staphylococcus carnosus (strain TM300).